The following is a 290-amino-acid chain: Elongation factor Ts (290 aa).

Residues 81–84 (TDFV) form an involved in Mg(2+) ion dislocation from EF-Tu region.

This sequence belongs to the EF-Ts family.

It is found in the cytoplasm. Functionally, associates with the EF-Tu.GDP complex and induces the exchange of GDP to GTP. It remains bound to the aminoacyl-tRNA.EF-Tu.GTP complex up to the GTP hydrolysis stage on the ribosome. This is Elongation factor Ts from Saccharophagus degradans (strain 2-40 / ATCC 43961 / DSM 17024).